A 31-amino-acid chain; its full sequence is MPILTSYFGFLLAASTITPALFIGLNKIRLI.

The helical transmembrane segment at 4 to 26 (LTSYFGFLLAASTITPALFIGLN) threads the bilayer.

It belongs to the PetL family. As to quaternary structure, the 4 large subunits of the cytochrome b6-f complex are cytochrome b6, subunit IV (17 kDa polypeptide, PetD), cytochrome f and the Rieske protein, while the 4 small subunits are PetG, PetL, PetM and PetN. The complex functions as a dimer.

The protein resides in the plastid. Its subcellular location is the chloroplast thylakoid membrane. Its function is as follows. Component of the cytochrome b6-f complex, which mediates electron transfer between photosystem II (PSII) and photosystem I (PSI), cyclic electron flow around PSI, and state transitions. PetL is important for photoautotrophic growth as well as for electron transfer efficiency and stability of the cytochrome b6-f complex. This is Cytochrome b6-f complex subunit 6 from Phalaenopsis aphrodite subsp. formosana (Moth orchid).